Reading from the N-terminus, the 124-residue chain is MSTINQLVRFSRVRKVTKSNVPALSKCPQKRGVCTRVYTTTPKKPNSALRKVCRVRLTNGHEVTAYIGGEGHNLQEHSVILIRGGRVKDLPGVRYHVIRGALDCSGVKDRKKGRSKYGVKKLKV.

D89 carries the 3-methylthioaspartic acid modification.

It belongs to the universal ribosomal protein uS12 family. In terms of assembly, part of the 30S ribosomal subunit. Contacts proteins S8 and S17. May interact with IF1 in the 30S initiation complex.

In terms of biological role, with S4 and S5 plays an important role in translational accuracy. Interacts with and stabilizes bases of the 16S rRNA that are involved in tRNA selection in the A site and with the mRNA backbone. Located at the interface of the 30S and 50S subunits, it traverses the body of the 30S subunit contacting proteins on the other side and probably holding the rRNA structure together. The combined cluster of proteins S8, S12 and S17 appears to hold together the shoulder and platform of the 30S subunit. This chain is Small ribosomal subunit protein uS12, found in Buchnera aphidicola subsp. Cinara cedri (strain Cc).